The primary structure comprises 508 residues: Flagellin (508 aa).

Belongs to the bacterial flagellin family.

Its subcellular location is the secreted. It localises to the bacterial flagellum. Functionally, flagellin is the subunit protein which polymerizes to form the filaments of bacterial flagella. The polypeptide is Flagellin (fliC) (Salmonella oranienberg).